We begin with the raw amino-acid sequence, 314 residues long: NAD-dependent protein lipoamidase sirtuin-4, mitochondrial (314 aa).

Residues 1-28 (MKMSFALTFRSAKGRWIANPSQPCSKAS) constitute a mitochondrion transit peptide. The 278-residue stretch at 37-314 (PPLDPEKVKE…GELLPLIDPC (278 aa)) folds into the Deacetylase sirtuin-type domain. NAD(+)-binding positions include 62 to 82 (GAGI…VGLY) and 143 to 146 (QNVD). His-161 functions as the Proton acceptor in the catalytic mechanism. Zn(2+)-binding residues include Cys-169, Cys-172, Cys-220, and Cys-223. NAD(+)-binding positions include 260 to 262 (GSS), 286 to 288 (NIG), and Cys-304.

Belongs to the sirtuin family. Class II subfamily. In terms of assembly, interacts with GLUD1, IDE and SLC25A5. Interacts with DLAT and PDHX. Interacts with MCCC1 (via the biotin carboxylation domain). Interacts with PCCA and PC. Zn(2+) is required as a cofactor. As to expression, detected in vascular smooth muscle and striated muscle. Detected in insulin-producing beta-cells in pancreas islets of Langerhans (at protein level). Widely expressed. Weakly expressed in leukocytes and fetal thymus.

Its subcellular location is the mitochondrion matrix. It carries out the reaction N(6)-[(R)-lipoyl]-L-lysyl-[protein] + NAD(+) + H2O = 2''-O-lipoyl-ADP-D-ribose + nicotinamide + L-lysyl-[protein]. It catalyses the reaction N(6)-biotinyl-L-lysyl-[protein] + NAD(+) + H2O = 2''-O-biotinyl-ADP-D-ribose + nicotinamide + L-lysyl-[protein]. The enzyme catalyses N(6)-acetyl-L-lysyl-[protein] + NAD(+) + H2O = 2''-O-acetyl-ADP-D-ribose + nicotinamide + L-lysyl-[protein]. The catalysed reaction is L-cysteinyl-[protein] + NAD(+) = S-(ADP-D-ribosyl)-L-cysteinyl-[protein] + nicotinamide + H(+). In terms of biological role, acts as a NAD-dependent protein lipoamidase, biotinylase, deacetylase and ADP-ribosyl transferase. Catalyzes more efficiently removal of lipoyl- and biotinyl- than acetyl-lysine modifications. Inhibits the pyruvate dehydrogenase complex (PDH) activity via the enzymatic hydrolysis of the lipoamide cofactor from the E2 component, DLAT, in a phosphorylation-independent manner. Catalyzes the transfer of ADP-ribosyl groups onto target proteins, including mitochondrial GLUD1, inhibiting GLUD1 enzyme activity. Acts as a negative regulator of mitochondrial glutamine metabolism by mediating mono ADP-ribosylation of GLUD1: expressed in response to DNA damage and negatively regulates anaplerosis by inhibiting GLUD1, leading to block metabolism of glutamine into tricarboxylic acid cycle and promoting cell cycle arrest. In response to mTORC1 signal, SIRT4 expression is repressed, promoting anaplerosis and cell proliferation. Acts as a tumor suppressor. Also acts as a NAD-dependent protein deacetylase: mediates deacetylation of 'Lys-471' of MLYCD, inhibiting its activity, thereby acting as a regulator of lipid homeostasis. Does not seem to deacetylate PC. Controls fatty acid oxidation by inhibiting PPARA transcriptional activation. Impairs SIRT1-PPARA interaction probably through the regulation of NAD(+) levels. Down-regulates insulin secretion. This is NAD-dependent protein lipoamidase sirtuin-4, mitochondrial from Homo sapiens (Human).